Reading from the N-terminus, the 512-residue chain is Bifunctional purine biosynthesis protein PurH (512 aa).

The 144-residue stretch at 1-144 (MKRALVSVSD…KNYHDVTIVV (144 aa)) folds into the MGS-like domain.

Belongs to the PurH family.

The catalysed reaction is (6R)-10-formyltetrahydrofolate + 5-amino-1-(5-phospho-beta-D-ribosyl)imidazole-4-carboxamide = 5-formamido-1-(5-phospho-D-ribosyl)imidazole-4-carboxamide + (6S)-5,6,7,8-tetrahydrofolate. It catalyses the reaction IMP + H2O = 5-formamido-1-(5-phospho-D-ribosyl)imidazole-4-carboxamide. The protein operates within purine metabolism; IMP biosynthesis via de novo pathway; 5-formamido-1-(5-phospho-D-ribosyl)imidazole-4-carboxamide from 5-amino-1-(5-phospho-D-ribosyl)imidazole-4-carboxamide (10-formyl THF route): step 1/1. It functions in the pathway purine metabolism; IMP biosynthesis via de novo pathway; IMP from 5-formamido-1-(5-phospho-D-ribosyl)imidazole-4-carboxamide: step 1/1. The sequence is that of Bifunctional purine biosynthesis protein PurH from Limosilactobacillus reuteri (strain DSM 20016) (Lactobacillus reuteri).